The following is a 282-amino-acid chain: MKKLSVIFLSVSMLSSIAFGDEDKVVATYKGGEVKESQIMQEFKPQLNLQSGETIKNFDDFPLQDQEKLIKIYVNNLLLKEEVAKSSITSSKEFQEKLENAKNQLAQQELLANYIKSNITDKMFDDEYNKYVDNLKGKEQIKVAHILVKSQKEANTVKTKLSKGGNFTKLAEEFSLDKATASNGGIIGYIILNQPGQLVPEFEQKAFALKVNEVSTPVKTSFGWHIIKVLEKKPVPIPTKEEAKVTIDNILAAEILKQYISDLEAKADLKIMLPKANSKTGS.

The first 20 residues, 1-20 (MKKLSVIFLSVSMLSSIAFG), serve as a signal peptide directing secretion. One can recognise a PpiC domain in the interval 138–231 (KEQIKVAHIL…FGWHIIKVLE (94 aa)).

This sequence belongs to the PpiC/parvulin rotamase family.

The protein localises to the cell outer membrane. The enzyme catalyses [protein]-peptidylproline (omega=180) = [protein]-peptidylproline (omega=0). The chain is Parvulin-like PPIase (plp) from Rickettsia prowazekii (strain Madrid E).